The primary structure comprises 130 residues: MSKQSVVKTKKRVKRVITDGVAHICASFNNTIVTITDRQGNSLFWCTSGASGFRGSRKCTPFAAQVAAEKAGRAVLDYGMKSLEVRINGPGPGRESAVRSLSNVGYKITNIIDVTPIPHNGCRPPKKRRV.

The protein belongs to the universal ribosomal protein uS11 family. Part of the 30S ribosomal subunit. Interacts with proteins S7 and S18. Binds to IF-3.

In terms of biological role, located on the platform of the 30S subunit, it bridges several disparate RNA helices of the 16S rRNA. Forms part of the Shine-Dalgarno cleft in the 70S ribosome. This Xylella fastidiosa (strain M23) protein is Small ribosomal subunit protein uS11.